The primary structure comprises 359 residues: Dihydroorotate dehydrogenase (quinone) (359 aa).

Residues 68 to 72 and alanine 92 contribute to the FMN site; that span reads AGFDK. Substrate is bound at residue lysine 72. Residue 117-121 participates in substrate binding; sequence NAYGF. 2 residues coordinate FMN: asparagine 146 and asparagine 179. A substrate-binding site is contributed by asparagine 179. The Nucleophile role is filled by serine 182. Residue asparagine 184 coordinates substrate. Residues lysine 215 and threonine 243 each contribute to the FMN site. 244–245 serves as a coordination point for substrate; that stretch reads NT. FMN is bound by residues glycine 263, glycine 292, and 313 to 314; that span reads YT.

It belongs to the dihydroorotate dehydrogenase family. Type 2 subfamily. In terms of assembly, monomer. FMN serves as cofactor.

Its subcellular location is the cell membrane. The catalysed reaction is (S)-dihydroorotate + a quinone = orotate + a quinol. It functions in the pathway pyrimidine metabolism; UMP biosynthesis via de novo pathway; orotate from (S)-dihydroorotate (quinone route): step 1/1. Catalyzes the conversion of dihydroorotate to orotate with quinone as electron acceptor. This Nautilia profundicola (strain ATCC BAA-1463 / DSM 18972 / AmH) protein is Dihydroorotate dehydrogenase (quinone).